The chain runs to 349 residues: Achromobactin transport system permease protein CbrC (349 aa).

Transmembrane regions (helical) follow at residues 32–52 (LALL…KLML), 82–102 (VLAA…QAMI), 111–131 (ILGI…FLAA), 138–158 (LPLA…WLAW), 168–188 (VLTG…MLVF), 190–210 (PLTT…GASW), 216–236 (LGGW…QVRV), 263–283 (VALA…GLIA), 290–310 (LVAP…AGLV), and 325–345 (DLPA…YLLI).

This sequence belongs to the binding-protein-dependent transport system permease family. FecCD subfamily.

It is found in the cell inner membrane. In terms of biological role, part of the binding-protein-dependent transport system CbrABCD for uptake of the siderophore achromobactin. Probably responsible for the translocation of the substrate across the membrane. The protein is Achromobactin transport system permease protein CbrC (cbrC) of Dickeya dadantii (strain 3937) (Erwinia chrysanthemi (strain 3937)).